A 1040-amino-acid chain; its full sequence is Vitamin B12-dependent ribonucleotide reductase (1040 aa).

Substrate contacts are provided by residues Ser169, 213-214 (AC), Gly242, 420-424 (NPCSE), and 604-608 (PTGTI). Cys214 and Cys433 are joined by a disulfide. The active-site Proton acceptor is Asn420. Cys422 (cysteine radical intermediate) is an active-site residue. Glu424 serves as the catalytic Proton acceptor. 2 disordered regions span residues 909–932 (SAEG…GATA) and 969–988 (GSAT…SDGA). Residues 969–979 (GSATNGHSNGQ) are compositionally biased toward polar residues.

Belongs to the ribonucleoside diphosphate reductase class-2 family. Requires adenosylcob(III)alamin as cofactor.

The catalysed reaction is a 2'-deoxyribonucleoside 5'-diphosphate + [thioredoxin]-disulfide + H2O = a ribonucleoside 5'-diphosphate + [thioredoxin]-dithiol. Functionally, catalyzes the reduction of ribonucleotides to deoxyribonucleotides. May function to provide a pool of deoxyribonucleotide precursors for DNA repair during oxygen limitation and/or for immediate growth after restoration of oxygen. This Rhodopirellula baltica (strain DSM 10527 / NCIMB 13988 / SH1) protein is Vitamin B12-dependent ribonucleotide reductase (nrdJ).